The following is a 385-amino-acid chain: UPF0764 protein C16orf89 homolog (385 aa).

The signal sequence occupies residues 1-20 (MARLGLLLLLLLALPPHFSS). Residues 344–385 (AHPEYYPNHGDPYSSSQSPASNYQDGAAGPDVQRTGRPLSVS) are disordered. The span at 356–367 (YSSSQSPASNYQ) shows a compositional bias: polar residues.

This sequence belongs to the UPF0764 family. In terms of assembly, homodimer. Post-translationally, glycosylated. In terms of tissue distribution, predominantly expressed in thyroid tissue.

The protein resides in the secreted. This is UPF0764 protein C16orf89 homolog from Mus musculus (Mouse).